Reading from the N-terminus, the 367-residue chain is UDP-N-acetylglucosamine--N-acetylmuramyl-(pentapeptide) pyrophosphoryl-undecaprenol N-acetylglucosamine transferase (367 aa).

Residues 15–17 (TGG), Asn127, Arg163, Ser191, Ile249, and Gln294 each bind UDP-N-acetyl-alpha-D-glucosamine.

Belongs to the glycosyltransferase 28 family. MurG subfamily.

It localises to the cell inner membrane. It carries out the reaction di-trans,octa-cis-undecaprenyl diphospho-N-acetyl-alpha-D-muramoyl-L-alanyl-D-glutamyl-meso-2,6-diaminopimeloyl-D-alanyl-D-alanine + UDP-N-acetyl-alpha-D-glucosamine = di-trans,octa-cis-undecaprenyl diphospho-[N-acetyl-alpha-D-glucosaminyl-(1-&gt;4)]-N-acetyl-alpha-D-muramoyl-L-alanyl-D-glutamyl-meso-2,6-diaminopimeloyl-D-alanyl-D-alanine + UDP + H(+). It functions in the pathway cell wall biogenesis; peptidoglycan biosynthesis. In terms of biological role, cell wall formation. Catalyzes the transfer of a GlcNAc subunit on undecaprenyl-pyrophosphoryl-MurNAc-pentapeptide (lipid intermediate I) to form undecaprenyl-pyrophosphoryl-MurNAc-(pentapeptide)GlcNAc (lipid intermediate II). The chain is UDP-N-acetylglucosamine--N-acetylmuramyl-(pentapeptide) pyrophosphoryl-undecaprenol N-acetylglucosamine transferase from Burkholderia pseudomallei (strain 668).